Reading from the N-terminus, the 1134-residue chain is Ubinuclein-1 (1134 aa).

Disordered stretches follow at residues 1-38 (MSEPHRVQFTSLPGSLNPAFLKKSRKEEAGAGEQHQDC) and 78-98 (LQPGDKKKDLSDPFNDEEKER). Residues 1–166 (MSEPHRVQFT…YGGFYINSGT (166 aa)) form a sufficient for interaction with HIRA region. Basic and acidic residues-rich tracts occupy residues 25 to 38 (RKEEAGAGEQHQDC) and 81 to 98 (GDKKKDLSDPFNDEEKER). Thr-166 carries the phosphothreonine modification. The disordered stretch occupies residues 171–220 (QASESEDDFIKEKKKKSPKKRKLKEGGEKIKKKKKDDTYDKEKKSKKSKF). Phosphoserine occurs at positions 173 and 175. Over residues 182–193 (EKKKKSPKKRKL) the composition is skewed to basic residues. Residues 194–213 (KEGGEKIKKKKKDDTYDKEK) show a composition bias toward basic and acidic residues. Lys-222 bears the N6-acetyllysine mark. The segment covering 253-268 (QKEKEAQKKREEEHKP) has biased composition (basic and acidic residues). 4 disordered regions span residues 253 to 282 (QKEKEAQKKREEEHKPVAVPSAEAQGLREL), 321 to 358 (SESPEGSPFRDMDDGSDSLGVGLDQEFRQPSSLPEGLP), 480 to 504 (EEEKDKEQRDRICSDEEEDEEKGGR), and 594 to 660 (PSKI…LEDS). Residues Ser-323, Ser-336, Ser-338, and Ser-493 each carry the phosphoserine modification. A coiled-coil region spans residues 479–542 (LEEEKDKEQR…SQDLERNNKA (64 aa)). Composition is skewed to basic and acidic residues over residues 480–493 (EEEKDKEQRDRICS) and 598–610 (KVKESSTKPDKKV). Ser-660 and Ser-677 each carry phosphoserine. Disordered stretches follow at residues 712–836 (TEEK…SPTQ) and 852–986 (QGFH…GVAK). Composition is skewed to low complexity over residues 792–804 (GPQVAVPVPGPQV) and 856–891 (PSAPATSGGLSASSSSSHKTPASSSSALSHPAKPHS). Polar residues predominate over residues 892-905 (VSSAGSSYKNNPFA). A compositionally biased stretch (low complexity) spans 906–932 (SSISKHGVSSGSSSSGGTPVQSSVSGS). Residues 941–950 (SVGQATSRPV) show a composition bias toward polar residues. Residues 973–982 (PNGDSSGGTQ) show a composition bias toward gly residues. Ser-1025 is subject to Phosphoserine. A compositionally biased stretch (low complexity) spans 1093 to 1108 (GLHSSPPHAAPLPHAA). The segment at 1093–1134 (GLHSSPPHAAPLPHAAVPTHIPQSLPGASQLHGKGPAVPRKL) is disordered.

Belongs to the ubinuclein family. In terms of assembly, component of a complex that includes at least ASF1A, CABIN1, HIRA, histone H3.3 and UBN1. Interacts with HIRA (via WD repeat domain); the interaction is direct. Interacts with ASF1A, CEBPA, TJP1, TJP2 and TJP3. (Microbial infection) Interacts with Epstein-Barr virus BZLF1. Ubiquitous. Also expressed in numerous tumors and cancer cell lines.

Its subcellular location is the nucleus. The protein localises to the nucleoplasm. It is found in the PML body. It localises to the cell junction. The protein resides in the tight junction. Acts as a novel regulator of senescence. Involved in the formation of senescence-associated heterochromatin foci (SAHF), which represses expression of proliferation-promoting genes. Binds to proliferation-promoting genes. May be required for replication-independent chromatin assembly. The protein is Ubinuclein-1 (UBN1) of Homo sapiens (Human).